Here is a 151-residue protein sequence, read N- to C-terminus: Superoxide dismutase [Cu-Zn] (151 aa).

The S-palmitoyl cysteine moiety is linked to residue cysteine 6. Cu cation contacts are provided by histidine 45, histidine 47, and histidine 62. Cysteine 56 and cysteine 144 are oxidised to a cystine. Zn(2+) is bound by residues histidine 62, histidine 70, histidine 79, and aspartate 82. Histidine 118 contributes to the Cu cation binding site.

It belongs to the Cu-Zn superoxide dismutase family. In terms of assembly, homodimer. Cu cation serves as cofactor. Requires Zn(2+) as cofactor.

The protein resides in the cytoplasm. It is found in the nucleus. The catalysed reaction is 2 superoxide + 2 H(+) = H2O2 + O2. Functionally, destroys radicals which are normally produced within the cells and which are toxic to biological systems. The sequence is that of Superoxide dismutase [Cu-Zn] (sod1) from Xenopus tropicalis (Western clawed frog).